The following is a 381-amino-acid chain: Endolytic peptidoglycan transglycosylase RlpA (381 aa).

Positions 1 to 19 are cleaved as a signal peptide; it reads MRKQLPVICVAAGIVLLAA. Cys-20 carries the N-palmitoyl cysteine lipid modification. The S-diacylglycerol cysteine moiety is linked to residue Cys-20. The tract at residues 196–274 is disordered; that stretch reads LPPRPDLSGG…QPAPVSAPVA (79 aa). A compositionally biased stretch (low complexity) spans 208-218; that stretch reads SASSAPAQPQG. In terms of domain architecture, SPOR spans 304–380; sequence AAASGRFVVQ…AQLQSFIASA (77 aa).

This sequence belongs to the RlpA family.

Its subcellular location is the cell membrane. In terms of biological role, lytic transglycosylase with a strong preference for naked glycan strands that lack stem peptides. The chain is Endolytic peptidoglycan transglycosylase RlpA from Salmonella typhimurium (strain LT2 / SGSC1412 / ATCC 700720).